We begin with the raw amino-acid sequence, 1248 residues long: Structural maintenance of chromosomes protein 1B (1248 aa).

Residue Gly32–Ser39 participates in ATP binding. Residues Glu163–Glu502 are a coiled coil. The SMC hinge domain maps to Ser514–Ala629. Lys648, Lys713, and Lys1032 each carry N6-acetyllysine. A coiled-coil region spans residues Trp666–Val912. Residues Pro1219–Arg1228 are compositionally biased toward basic and acidic residues. The interval Pro1219–Arg1248 is disordered.

It belongs to the SMC family. SMC1 subfamily. As to quaternary structure, forms a heterodimer with SMC3. Component of a meiosis-specific cohesin complex, probably composed of the SMC1B and SMC3 heterodimer attached via their SMC hinge domain, RAD21 (or its meiosis-specific related protein REC8), which link them, and STAG3, which interacts with RAD21 or REC8. The cohesin complex interacts with the cohesin loading complex subunits NIPBL/Scc2 (via HEAT repeats) and MAU2/Scc4. NIPBL directly contacts all members of the complex, RAD21, SMC1A/B, SMC3 and STAG1. In terms of tissue distribution, spermatocytes (at protein level). Testis and ovary specific. Not expressed in somatic cells.

It is found in the nucleus. The protein resides in the chromosome. The protein localises to the centromere. Functionally, meiosis-specific component of cohesin complex. Required for the maintenance of meiotic cohesion, but not, or only to a minor extent, for its establishment. Contributes to axial element (AE) formation and the organization of chromatin loops along the AE. Plays a key role in synapsis, recombination and chromosome movements. The cohesin complex is required for the cohesion of sister chromatids after DNA replication. The cohesin complex apparently forms a large proteinaceous ring within which sister chromatids can be trapped. At anaphase, the complex is cleaved and dissociates from chromatin, allowing sister chromatids to segregate. The meiosis-specific cohesin complex probably replaces mitosis specific cohesin complex when it dissociates from chromatin during prophase I. The chain is Structural maintenance of chromosomes protein 1B (Smc1b) from Mus musculus (Mouse).